An 82-amino-acid chain; its full sequence is Sulfur carrier protein TusA (82 aa).

The Cysteine persulfide intermediate role is filled by cysteine 20.

It belongs to the sulfur carrier protein TusA family.

The protein localises to the cytoplasm. Functionally, sulfur carrier protein which probably makes part of a sulfur-relay system. This is Sulfur carrier protein TusA from Aeromonas hydrophila subsp. hydrophila (strain ATCC 7966 / DSM 30187 / BCRC 13018 / CCUG 14551 / JCM 1027 / KCTC 2358 / NCIMB 9240 / NCTC 8049).